Reading from the N-terminus, the 420-residue chain is MSNVRYISNLTRETYALILAGGRGSRLHELTDWRAKPALYFGGKFRIIDFPLSNCINSGIRRVGVVTQYKSHSLIRHVMRGWGHFKKELGESVEILPASQRYSENWYQGTADAVFQNIDIIRHELPKYVMVLSGDHVYRMDYAGLLAAHAESGADMTVSCLEVPVAEAAGAFGVMEVDDEMRILGFEEKPKHPKHSPGNPEKCLASMGNYVFNTEFLFDQLKKDAQNANSDRDFGKDIIPSIIEKHKVFAYPFKSAFPNEQAYWRDVGTLDSFWQANMELLSPTPALNLYDAKWPIWTYQEQLPPAKFVFDDDDRRGMAVDSIISGGCIISGATVRRSVLFNEVRVCSYSVVEDSVVLPDVVVLRHCKIKNAIIDRGCIIPEGTVIGYNHDHDRAKGFRVSEKGITLVTRDMLGLPVGYE.

Residues Y107, G173, 188-189 (EK), and S206 contribute to the alpha-D-glucose 1-phosphate site.

It belongs to the bacterial/plant glucose-1-phosphate adenylyltransferase family. As to quaternary structure, homotetramer.

The enzyme catalyses alpha-D-glucose 1-phosphate + ATP + H(+) = ADP-alpha-D-glucose + diphosphate. It functions in the pathway glycan biosynthesis; glycogen biosynthesis. Involved in the biosynthesis of ADP-glucose, a building block required for the elongation reactions to produce glycogen. Catalyzes the reaction between ATP and alpha-D-glucose 1-phosphate (G1P) to produce pyrophosphate and ADP-Glc. This chain is Glucose-1-phosphate adenylyltransferase, found in Shewanella sp. (strain MR-4).